Here is a 72-residue protein sequence, read N- to C-terminus: Cytochrome c oxidase subunit 8C, mitochondrial (72 aa).

The transit peptide at 1-29 (MSRLLLLCSSLLRHRAVLFSKPGHPGRLS) directs the protein to the mitochondrion. The Mitochondrial matrix segment spans residues 30 to 40 (HSESPQKKILS). The chain crosses the membrane as a helical span at residues 41-64 (PTESAVGIVVFFTTFYIPAAYVLS). Topologically, residues 65 to 72 (SLKYFKGE) are mitochondrial intermembrane.

This sequence belongs to the cytochrome c oxidase VIII family. In terms of assembly, component of the cytochrome c oxidase (complex IV, CIV), a multisubunit enzyme composed of 14 subunits. The complex is composed of a catalytic core of 3 subunits MT-CO1, MT-CO2 and MT-CO3, encoded in the mitochondrial DNA, and 11 supernumerary subunits COX4I, COX5A, COX5B, COX6A, COX6B, COX6C, COX7A, COX7B, COX7C, COX8 and NDUFA4, which are encoded in the nuclear genome. The complex exists as a monomer or a dimer and forms supercomplexes (SCs) in the inner mitochondrial membrane with NADH-ubiquinone oxidoreductase (complex I, CI) and ubiquinol-cytochrome c oxidoreductase (cytochrome b-c1 complex, complex III, CIII), resulting in different assemblies (supercomplex SCI(1)III(2)IV(1) and megacomplex MCI(2)III(2)IV(2)).

It is found in the mitochondrion inner membrane. It functions in the pathway energy metabolism; oxidative phosphorylation. Its function is as follows. Component of the cytochrome c oxidase, the last enzyme in the mitochondrial electron transport chain which drives oxidative phosphorylation. The respiratory chain contains 3 multisubunit complexes succinate dehydrogenase (complex II, CII), ubiquinol-cytochrome c oxidoreductase (cytochrome b-c1 complex, complex III, CIII) and cytochrome c oxidase (complex IV, CIV), that cooperate to transfer electrons derived from NADH and succinate to molecular oxygen, creating an electrochemical gradient over the inner membrane that drives transmembrane transport and the ATP synthase. Cytochrome c oxidase is the component of the respiratory chain that catalyzes the reduction of oxygen to water. Electrons originating from reduced cytochrome c in the intermembrane space (IMS) are transferred via the dinuclear copper A center (CU(A)) of subunit 2 and heme A of subunit 1 to the active site in subunit 1, a binuclear center (BNC) formed by heme A3 and copper B (CU(B)). The BNC reduces molecular oxygen to 2 water molecules using 4 electrons from cytochrome c in the IMS and 4 protons from the mitochondrial matrix. This chain is Cytochrome c oxidase subunit 8C, mitochondrial (Cox8c), found in Mus musculus (Mouse).